A 134-amino-acid chain; its full sequence is Small ribosomal subunit protein uS8c (134 aa).

It belongs to the universal ribosomal protein uS8 family. As to quaternary structure, part of the 30S ribosomal subunit.

Its subcellular location is the plastid. It localises to the chloroplast. One of the primary rRNA binding proteins, it binds directly to 16S rRNA central domain where it helps coordinate assembly of the platform of the 30S subunit. The polypeptide is Small ribosomal subunit protein uS8c (rps8) (Gossypium hirsutum (Upland cotton)).